We begin with the raw amino-acid sequence, 249 residues long: 1-(5-phosphoribosyl)-5-[(5-phosphoribosylamino)methylideneamino] imidazole-4-carboxamide isomerase (249 aa).

Catalysis depends on Asp-11, which acts as the Proton acceptor. Asp-132 acts as the Proton donor in catalysis.

The protein belongs to the HisA/HisF family.

It is found in the cytoplasm. The enzyme catalyses 1-(5-phospho-beta-D-ribosyl)-5-[(5-phospho-beta-D-ribosylamino)methylideneamino]imidazole-4-carboxamide = 5-[(5-phospho-1-deoxy-D-ribulos-1-ylimino)methylamino]-1-(5-phospho-beta-D-ribosyl)imidazole-4-carboxamide. It functions in the pathway amino-acid biosynthesis; L-histidine biosynthesis; L-histidine from 5-phospho-alpha-D-ribose 1-diphosphate: step 4/9. The polypeptide is 1-(5-phosphoribosyl)-5-[(5-phosphoribosylamino)methylideneamino] imidazole-4-carboxamide isomerase (Nitrobacter winogradskyi (strain ATCC 25391 / DSM 10237 / CIP 104748 / NCIMB 11846 / Nb-255)).